The primary structure comprises 209 residues: NADH-quinone oxidoreductase subunit C (209 aa).

It belongs to the complex I 30 kDa subunit family. In terms of assembly, NDH-1 is composed of 14 different subunits. Subunits NuoB, C, D, E, F, and G constitute the peripheral sector of the complex.

The protein resides in the cell inner membrane. The catalysed reaction is a quinone + NADH + 5 H(+)(in) = a quinol + NAD(+) + 4 H(+)(out). In terms of biological role, NDH-1 shuttles electrons from NADH, via FMN and iron-sulfur (Fe-S) centers, to quinones in the respiratory chain. The immediate electron acceptor for the enzyme in this species is believed to be ubiquinone. Couples the redox reaction to proton translocation (for every two electrons transferred, four hydrogen ions are translocated across the cytoplasmic membrane), and thus conserves the redox energy in a proton gradient. The protein is NADH-quinone oxidoreductase subunit C of Phenylobacterium zucineum (strain HLK1).